The sequence spans 265 residues: Mlc titration factor A (265 aa).

Zn(2+)-binding residues include H111, H148, H152, and E211.

The protein belongs to the MtfA family. As to quaternary structure, interacts with Mlc. Zn(2+) is required as a cofactor.

Its subcellular location is the cytoplasm. Functionally, involved in the modulation of the activity of the glucose-phosphotransferase system (glucose-PTS). Interacts with the transcriptional repressor Mlc, preventing its interaction with DNA and leading to the modulation of expression of genes regulated by Mlc, including ptsG, which encodes the PTS system glucose-specific EIICB component. In terms of biological role, shows zinc-dependent metallopeptidase activity. The polypeptide is Mlc titration factor A (Cronobacter sakazakii (strain ATCC BAA-894) (Enterobacter sakazakii)).